The following is a 67-amino-acid chain: MRLHYLLFVFLILFLVPAPGDAFLPKTLRKFFCRIRGGRCAVLNCLGKEEQIGRCSNSGRKCCRKKK.

The N-terminal stretch at 1–22 (MRLHYLLFVFLILFLVPAPGDA) is a signal peptide. Intrachain disulfides connect C33–C62, C40–C55, and C45–C63.

It belongs to the beta-defensin family.

The protein localises to the secreted. Has antibacterial activity. This chain is Beta-defensin 14 (Defb14), found in Mus musculus (Mouse).